The sequence spans 118 residues: Transcription factor PAR2 (118 aa).

The interval 1-59 is disordered; sequence MEKTLATSHTKRSSPPSPSSAVNTSSTGFNRRTRQRLSDATASVSETDVEDEDEDEEGV. The span at 19 to 30 shows a compositional bias: polar residues; that stretch reads SSAVNTSSTGFN. The bHLH domain maps to 43–92; sequence SVSETDVEDEDEDEEGVEEKIEALQTIVPGGTELGVDALFEETASYILAL. Positions 47-59 are enriched in acidic residues; sequence TDVEDEDEDEEGV.

This sequence belongs to the bHLH protein family. As to quaternary structure, homodimer.

It is found in the nucleus. Atypical bHLH transcription factor that acts as a negative regulator of a variety of shade avoidance syndrome (SAS) responses, including seedling elongation and photosynthetic pigment accumulation. Acts as a direct transcriptional repressor of two auxin-responsive genes, SAUR15 and SAUR68. May function in integrating shade and hormone transcriptional networks in response to light and auxin changes. In Arabidopsis thaliana (Mouse-ear cress), this protein is Transcription factor PAR2 (PAR2).